Reading from the N-terminus, the 96-residue chain is Protein RnfH (96 aa).

This sequence belongs to the UPF0125 (RnfH) family.

In Pectobacterium carotovorum subsp. carotovorum (strain PC1), this protein is Protein RnfH.